The primary structure comprises 481 residues: Glutamyl-tRNA(Gln) amidotransferase subunit A (481 aa).

Catalysis depends on charge relay system residues K76 and S151. The Acyl-ester intermediate role is filled by S175.

Belongs to the amidase family. GatA subfamily. Heterotrimer of A, B and C subunits.

It catalyses the reaction L-glutamyl-tRNA(Gln) + L-glutamine + ATP + H2O = L-glutaminyl-tRNA(Gln) + L-glutamate + ADP + phosphate + H(+). Allows the formation of correctly charged Gln-tRNA(Gln) through the transamidation of misacylated Glu-tRNA(Gln) in organisms which lack glutaminyl-tRNA synthetase. The reaction takes place in the presence of glutamine and ATP through an activated gamma-phospho-Glu-tRNA(Gln). The polypeptide is Glutamyl-tRNA(Gln) amidotransferase subunit A (Chlorobaculum parvum (strain DSM 263 / NCIMB 8327) (Chlorobium vibrioforme subsp. thiosulfatophilum)).